The chain runs to 1474 residues: Alpha-2-macroglobulin-P (1474 aa).

The first 32 residues, 1–32 (MGKRWLPSLALLPLPPPLLLLLLLLLPTNASA), serve as a signal peptide directing secretion. Cys55 and Cys93 are joined by a disulfide. 3 N-linked (GlcNAc...) asparagine glycosylation sites follow: Asn62, Asn77, and Asn253. 2 disulfide bridges follow: Cys257–Cys305 and Cys275–Cys293. An N-linked (GlcNAc...) asparagine glycan is attached at Asn402. Cystine bridges form between Cys476-Cys569, Cys601-Cys771, and Cys650-Cys697. A bait region region spans residues 623 to 752 (LVYDLLPVKD…LVIVDSTGVA (130 aa)). Asn654 and Asn774 each carry an N-linked (GlcNAc...) asparagine glycan. Intrachain disulfides connect Cys821–Cys849, Cys847–Cys883, Cys921–Cys1321, Cys1079–Cys1127, and Cys1352–Cys1467. Asn869 carries N-linked (GlcNAc...) asparagine glycosylation. A cross-link (isoglutamyl cysteine thioester (Cys-Gln)) is located at residues 972 to 975 (CGEQ). An N-linked (GlcNAc...) asparagine glycan is attached at Asn991. Residue Asn1366 is glycosylated (N-linked (GlcNAc...) asparagine).

The protein belongs to the protease inhibitor I39 (alpha-2-macroglobulin) family. Homotetramer; disulfide-linked. In terms of tissue distribution, expressed in uterus, mesometrial lymphoid aggregate and mammary tissue during pregnancy. Expressed in ovary, testis and kidney. Low level expression in heart. Not expressed in liver.

It localises to the secreted. Its function is as follows. Is able to inhibit all four classes of proteinases by a unique 'trapping' mechanism. This protein has a peptide stretch, called the 'bait region' which contains specific cleavage sites for different proteinases. When a proteinase cleaves the bait region, a conformational change is induced in the protein which traps the proteinase. The entrapped enzyme remains active against low molecular weight substrates (activity against high molecular weight substrates is greatly reduced). Following cleavage in the bait region a thioester bond is hydrolyzed and mediates the covalent binding of the protein to the proteinase. The sequence is that of Alpha-2-macroglobulin-P from Mus musculus (Mouse).